The sequence spans 470 residues: Cysteine--tRNA ligase (470 aa).

Cys29 provides a ligand contact to Zn(2+). Positions 31-41 (PTVYNYAHIGN) match the 'HIGH' region motif. Cys211, His236, and Glu240 together coordinate Zn(2+). Positions 273–277 (KMSKS) match the 'KMSKS' region motif. An ATP-binding site is contributed by Lys276.

This sequence belongs to the class-I aminoacyl-tRNA synthetase family. Monomer. The cofactor is Zn(2+).

The protein resides in the cytoplasm. It carries out the reaction tRNA(Cys) + L-cysteine + ATP = L-cysteinyl-tRNA(Cys) + AMP + diphosphate. The polypeptide is Cysteine--tRNA ligase (Phenylobacterium zucineum (strain HLK1)).